The following is a 178-amino-acid chain: Ribosome maturation factor RimM (178 aa).

Residues 101 to 178 (TDEYYWYQLV…VMRVEWDADF (78 aa)) form the PRC barrel domain.

This sequence belongs to the RimM family. As to quaternary structure, binds ribosomal protein uS19.

It is found in the cytoplasm. Functionally, an accessory protein needed during the final step in the assembly of 30S ribosomal subunit, possibly for assembly of the head region. Essential for efficient processing of 16S rRNA. May be needed both before and after RbfA during the maturation of 16S rRNA. It has affinity for free ribosomal 30S subunits but not for 70S ribosomes. This is Ribosome maturation factor RimM from Pseudomonas entomophila (strain L48).